A 61-amino-acid chain; its full sequence is Metallothionein-1 (61 aa).

M1 bears the N-acetylmethionine mark. Residues 1-29 (MDPNCSCSTGGSCTCSSSCGCKNCKCTSC) are beta. A divalent metal cation is bound by residues C5, C7, C13, C15, C19, C21, C24, C26, C29, C33, C34, C36, C37, C41, C44, C48, C50, C57, C59, and C60. The tract at residues 30–61 (KKSCCSCCPVGCSKCAQGCVCKGASDKCTCCA) is alpha.

This sequence belongs to the metallothionein superfamily. Type 1 family.

Functionally, metallothioneins have a high content of cysteine residues that bind various heavy metals; these proteins are transcriptionally regulated by both heavy metals and glucocorticoids. This chain is Metallothionein-1 (Mt1), found in Rattus norvegicus (Rat).